Here is a 340-residue protein sequence, read N- to C-terminus: Ketol-acid reductoisomerase (NADP(+)) (340 aa).

The KARI N-terminal Rossmann domain occupies 1 to 182 (MRVYYDRDCD…GGGRSGIIET (182 aa)). NADP(+)-binding positions include 24–27 (YGSQ), R48, S51, S53, and 83–86 (DELQ). H108 is an active-site residue. An NADP(+)-binding site is contributed by G134. The region spanning 183–329 (NFRQECETDL…EKLRGMMPWI (147 aa)) is the KARI C-terminal knotted domain. Mg(2+) is bound by residues D191, E195, E227, and E231. S252 contributes to the substrate binding site.

The protein belongs to the ketol-acid reductoisomerase family. Mg(2+) is required as a cofactor.

It carries out the reaction (2R)-2,3-dihydroxy-3-methylbutanoate + NADP(+) = (2S)-2-acetolactate + NADPH + H(+). The enzyme catalyses (2R,3R)-2,3-dihydroxy-3-methylpentanoate + NADP(+) = (S)-2-ethyl-2-hydroxy-3-oxobutanoate + NADPH + H(+). It functions in the pathway amino-acid biosynthesis; L-isoleucine biosynthesis; L-isoleucine from 2-oxobutanoate: step 2/4. Its pathway is amino-acid biosynthesis; L-valine biosynthesis; L-valine from pyruvate: step 2/4. In terms of biological role, involved in the biosynthesis of branched-chain amino acids (BCAA). Catalyzes an alkyl-migration followed by a ketol-acid reduction of (S)-2-acetolactate (S2AL) to yield (R)-2,3-dihydroxy-isovalerate. In the isomerase reaction, S2AL is rearranged via a Mg-dependent methyl migration to produce 3-hydroxy-3-methyl-2-ketobutyrate (HMKB). In the reductase reaction, this 2-ketoacid undergoes a metal-dependent reduction by NADPH to yield (R)-2,3-dihydroxy-isovalerate. This is Ketol-acid reductoisomerase (NADP(+)) from Cereibacter sphaeroides (strain ATCC 17029 / ATH 2.4.9) (Rhodobacter sphaeroides).